Consider the following 188-residue polypeptide: Elongation factor P-like protein (188 aa).

It belongs to the elongation factor P family.

This is Elongation factor P-like protein from Xanthomonas euvesicatoria pv. vesicatoria (strain 85-10) (Xanthomonas campestris pv. vesicatoria).